Reading from the N-terminus, the 369-residue chain is C-C chemokine receptor type 9 (369 aa).

Over 1–48 (MMPTELTSLIPGMFDDFSYDSTASTDDYMNLNFSSFFCKKNNVRQFAS) the chain is Extracellular. N-linked (GlcNAc...) asparagine glycosylation is present at asparagine 32. Intrachain disulfides connect cysteine 38-cysteine 289 and cysteine 119-cysteine 198. Residues 49 to 74 (HFLPPLYWLVFIVGTLGNSLVILVYW) form a helical membrane-spanning segment. At 75-85 (YCTRVKTMTDM) the chain is on the cytoplasmic side. A helical transmembrane segment spans residues 86–109 (FLLNLAIADLLFLATLPFWAIAAA). Residues 110-120 (GQWMFQTFMCK) are Extracellular-facing. The chain crosses the membrane as a helical span at residues 121–150 (VVNSMYKMNFYSCVLLIMCISVDRYIAIVQ). At 151–159 (AMKAQVWRQ) the chain is on the cytoplasmic side. Residues 160 to 185 (KRLLYSKMVCITIWVMAAVLCTPEIL) traverse the membrane as a helical segment. Residues 186–208 (YSQVSGESGIATCTMVYPKDKNA) are Extracellular-facing. A helical membrane pass occupies residues 209 to 243 (KLKSAVLILKVTLGFFLPFMVMAFCYTIIIHTLVQ). At 244–248 (AKKSS) the chain is on the cytoplasmic side. Residues 249-283 (KHKALKVTITVLTVFIMSQFPYNSILVVQAVDAYA) form a helical membrane-spanning segment. The Extracellular portion of the chain corresponds to 284 to 290 (MFISNCT). A helical membrane pass occupies residues 291–321 (ISTNIDICFQVTQTIAFFHSCLNPVLYVFVG). Over 322 to 369 (ERFRRDLVKTLKNLGCISQAQWVSFTRREGSLKLSSMLLETTSGALSL) the chain is Cytoplasmic.

The protein belongs to the G-protein coupled receptor 1 family. Highly expressed in the thymus and low in lymph nodes and spleen.

The protein resides in the cell membrane. Its function is as follows. Receptor for chemokine SCYA25/TECK. Subsequently transduces a signal by increasing the intracellular calcium ions level. The polypeptide is C-C chemokine receptor type 9 (Ccr9) (Mus musculus (Mouse)).